The chain runs to 396 residues: Cathepsin E (396 aa).

Positions 1–19 (MKTLPLLLLLLLDLGQAQG) are cleaved as a signal peptide. Residues 20 to 53 (TLDRVPLRRQPSLRKKLRAQGQLSEFWKAHKVDM) constitute a propeptide, activation peptide. The region spanning 78-392 (YFGTISIGSP…DRGSNRVGLA (315 aa)) is the Peptidase A1 domain. N-linked (GlcNAc...) asparagine glycosylation occurs at asparagine 90. The active site involves aspartate 96. 2 disulfide bridges follow: cysteine 109-cysteine 114 and cysteine 272-cysteine 276. The active site involves aspartate 281. The cysteines at positions 314 and 351 are disulfide-linked.

It belongs to the peptidase A1 family. Homodimer; disulfide-linked. Glycosylated. The nature of the carbohydrate chain varies between cell types.

It localises to the endosome. It carries out the reaction Similar to cathepsin D, but slightly broader specificity.. Functionally, may have a role in immune function. Probably involved in the processing of antigenic peptides during MHC class II-mediated antigen presentation. May play a role in activation-induced lymphocyte depletion in the thymus, and in neuronal degeneration and glial cell activation in the brain. This Oryctolagus cuniculus (Rabbit) protein is Cathepsin E (CTSE).